A 597-amino-acid chain; its full sequence is Probable translation initiation factor IF-2 (597 aa).

Residues 4–221 enclose the tr-type G domain; it reads IRQPIIAVLG…LISGLAQKYL (218 aa). A G1 region spans residues 13–20; sequence GHVDHGKT. Residue 13–20 coordinates GTP; the sequence is GHVDHGKT. The tract at residues 38 to 42 is G2; the sequence is GITQH. A G3 region spans residues 77 to 80; the sequence is DTPG. Residues 77–81 and 131–134 contribute to the GTP site; these read DTPGH and NKID. Positions 131 to 134 are G4; that stretch reads NKID. Residues 199–201 form a G5 region; sequence SAK.

It belongs to the TRAFAC class translation factor GTPase superfamily. Classic translation factor GTPase family. IF-2 subfamily.

Functionally, function in general translation initiation by promoting the binding of the formylmethionine-tRNA to ribosomes. Seems to function along with eIF-2. The polypeptide is Probable translation initiation factor IF-2 (Thermococcus sibiricus (strain DSM 12597 / MM 739)).